The following is a 252-amino-acid chain: Vacuolar-sorting protein dot2 (252 aa).

It belongs to the SNF8 family. As to quaternary structure, component of the endosomal sorting complex required for transport II (ESCRT-II).

Its subcellular location is the cytoplasm. It localises to the nucleus. The protein localises to the endosome membrane. Functionally, component of the endosomal sorting complex required for transport II (ESCRT-II), which is required for multivesicular body (MVB) formation and sorting of endosomal cargo proteins into MVBs. The MVB pathway mediates delivery of transmembrane proteins into the lumen of the lysosome for degradation. The ESCRT-II complex is probably involved in the recruitment of the ESCRT-III complex. Negatively regulates meiotic spindle pole body maturation via indirect regulation of the pcp1 gene. Required for efficient entry into pre-meiotic S phase. The polypeptide is Vacuolar-sorting protein dot2 (dot2) (Schizosaccharomyces pombe (strain 972 / ATCC 24843) (Fission yeast)).